The sequence spans 222 residues: Charged multivesicular body protein 4b (222 aa).

2 disordered regions span residues 1 to 21 (MSLI…PSPQ) and 177 to 222 (NLLE…WATA). The stretch at 21-182 (QEAIQKLRDT…ELDKNLLEVQ (162 aa)) forms a coiled coil.

This sequence belongs to the SNF7 family. In terms of assembly, probable core component of the endosomal sorting required for transport complex III (ESCRT-III). ESCRT-III components are thought to multimerize to form a flat lattice on the perimeter membrane of the endosome.

It is found in the cytoplasm. It localises to the cytosol. The protein localises to the late endosome membrane. Its subcellular location is the midbody. Probable core component of the endosomal sorting required for transport complex III (ESCRT-III) which is involved in multivesicular bodies (MVBs) formation and sorting of endosomal cargo proteins into MVBs. MVBs contain intraluminal vesicles (ILVs) that are generated by invagination and scission from the limiting membrane of the endosome and mostly are delivered to lysosomes enabling degradation of membrane proteins, such as stimulated growth factor receptors, lysosomal enzymes and lipids. The protein is Charged multivesicular body protein 4b (chmp4b) of Xenopus laevis (African clawed frog).